The primary structure comprises 142 residues: Large ribosomal subunit protein uL11 (142 aa).

It belongs to the universal ribosomal protein uL11 family. In terms of assembly, part of the ribosomal stalk of the 50S ribosomal subunit. Interacts with L10 and the large rRNA to form the base of the stalk. L10 forms an elongated spine to which L12 dimers bind in a sequential fashion forming a multimeric L10(L12)X complex. One or more lysine residues are methylated.

In terms of biological role, forms part of the ribosomal stalk which helps the ribosome interact with GTP-bound translation factors. The chain is Large ribosomal subunit protein uL11 from Xanthomonas campestris pv. campestris (strain B100).